A 141-amino-acid polypeptide reads, in one-letter code: Nucleoside diphosphate kinase (141 aa).

The ATP site is built by lysine 11, phenylalanine 59, arginine 87, threonine 93, arginine 104, and asparagine 114. Residue histidine 117 is the Pros-phosphohistidine intermediate of the active site.

This sequence belongs to the NDK family. Homotetramer. It depends on Mg(2+) as a cofactor.

It is found in the cytoplasm. It catalyses the reaction a 2'-deoxyribonucleoside 5'-diphosphate + ATP = a 2'-deoxyribonucleoside 5'-triphosphate + ADP. It carries out the reaction a ribonucleoside 5'-diphosphate + ATP = a ribonucleoside 5'-triphosphate + ADP. Its function is as follows. Major role in the synthesis of nucleoside triphosphates other than ATP. The ATP gamma phosphate is transferred to the NDP beta phosphate via a ping-pong mechanism, using a phosphorylated active-site intermediate. This is Nucleoside diphosphate kinase from Legionella pneumophila subsp. pneumophila (strain Philadelphia 1 / ATCC 33152 / DSM 7513).